Reading from the N-terminus, the 816-residue chain is H(+)/Cl(-) exchange transporter 5 (816 aa).

Over Met-1–Ala-124 the chain is Cytoplasmic. Helical transmembrane passes span Phe-125–Gly-162 and Val-208–Phe-231. The Selectivity filter part_1 motif lies at Gly-237–Pro-241. Ser-238 lines the chloride pocket. Positions Ile-240–Leu-247 form an intramembrane region, helical. 2 helical membrane-spanning segments follow: residues Leu-256–Gly-275 and Glu-281–Asn-300. A Selectivity filter part_2 motif is present at residues Gly-279–Pro-283. Intramembrane regions (helical) lie at residues Val-312–Ala-324 and Pro-328–Leu-336. A run of 5 helical transmembrane segments spans residues Leu-348–Asn-366, Leu-389–Cys-414, Leu-422–Phe-442, Met-498–Met-518, and Gly-523–Gly-542. Positions Gly-523–Pro-527 match the Selectivity filter part_3 motif. Position 525 (Phe-525) interacts with chloride. Residues Gly-570 to Val-584 constitute an intramembrane region (helical). Positions Thr-585–Met-587 form an intramembrane region, note=Loop between two helices. An intramembrane region (helical) is located at residues Thr-588–Thr-599. The note=Loop between two helices intramembrane region spans Gly-600–Tyr-604. A helical membrane pass occupies residues Ile-605–Leu-622. Residues Gly-623–Asn-816 are Cytoplasmic-facing. Tyr-628 contacts chloride. CBS domains follow at residues Met-656–Lys-720 and Ile-752–Glu-811. Residues Thr-666, Tyr-687–Gly-689, and Thr-794–Asp-797 contribute to the ATP site.

It belongs to the chloride channel (TC 2.A.49) family. ClC-5/CLCN5 subfamily. As to quaternary structure, interacts with NEDD4 and NEDD4L. In terms of processing, ubiquitinated by NEDD4L in the presence of albumin; which promotes endocytosis and proteasomal degradation. In terms of tissue distribution, kidney specific.

It localises to the golgi apparatus membrane. The protein resides in the endosome membrane. It is found in the cell membrane. It catalyses the reaction 2 chloride(in) + H(+)(out) = 2 chloride(out) + H(+)(in). Its function is as follows. Proton-coupled chloride transporter. Functions as antiport system and exchanges chloride ions against protons. Important for normal acidification of the endosome lumen. May play an important role in renal tubular function. The CLC channel family contains both chloride channels and proton-coupled anion transporters that exchange chloride or another anion for protons. The absence of conserved gating glutamate residues is typical for family members that function as channels. This chain is H(+)/Cl(-) exchange transporter 5 (Clcn5), found in Rattus norvegicus (Rat).